Here is a 297-residue protein sequence, read N- to C-terminus: Carbamate kinase (297 aa).

Belongs to the carbamate kinase family.

It localises to the cytoplasm. The catalysed reaction is hydrogencarbonate + NH4(+) + ATP = carbamoyl phosphate + ADP + H2O + H(+). The enzyme catalyses carbamate + ATP = carbamoyl phosphate + ADP. It catalyses the reaction hydrogencarbonate + NH4(+) = carbamate + H2O + H(+). Its pathway is nitrogen metabolism; (S)-allantoin degradation. In terms of biological role, kinase involved in the anaerobic nitrogen utilization via the assimilation of allantoin. Catalyzes the transfer of a phosphate group from carbamoyl phosphate to ADP to produce ATP and leave carbamate, which spontaneously hydrolyzes to ammonia and hydrogencarbonate. In Escherichia coli O6:H1 (strain CFT073 / ATCC 700928 / UPEC), this protein is Carbamate kinase.